A 221-amino-acid chain; its full sequence is Translation initiation factor 6 (221 aa).

This sequence belongs to the eIF-6 family.

Binds to the 50S ribosomal subunit and prevents its association with the 30S ribosomal subunit to form the 70S initiation complex. In Methanospirillum hungatei JF-1 (strain ATCC 27890 / DSM 864 / NBRC 100397 / JF-1), this protein is Translation initiation factor 6.